The primary structure comprises 400 residues: DNA polymerase IV (400 aa).

The UmuC domain maps to 8–191; it reads ILLCDANSFF…LPVRELFGIG (184 aa). Positions 12 and 109 each coordinate Mg(2+). The active site involves Glu110.

Belongs to the DNA polymerase type-Y family. In terms of assembly, monomer. Mg(2+) is required as a cofactor.

It localises to the cytoplasm. It carries out the reaction DNA(n) + a 2'-deoxyribonucleoside 5'-triphosphate = DNA(n+1) + diphosphate. Functionally, poorly processive, error-prone DNA polymerase involved in untargeted mutagenesis. Copies undamaged DNA at stalled replication forks, which arise in vivo from mismatched or misaligned primer ends. These misaligned primers can be extended by PolIV. Exhibits no 3'-5' exonuclease (proofreading) activity. May be involved in translesional synthesis, in conjunction with the beta clamp from PolIII. The sequence is that of DNA polymerase IV from Moorella thermoacetica (strain ATCC 39073 / JCM 9320).